A 1590-amino-acid chain; its full sequence is MRLFSLLPLLALLVVQAAGQSEVTSDDPATDAGSTTNSTTDTKPRIPSQDEILGQMPSINPIRTGNPQMDAFYMMFPALGSLLKWGSLFPAYSILGAIPDNLQPTAAASKVVLVLADDATAKTRVARQNPPPNPLGQLMNWPALPQDFQLPSMDLGPQVGSFLAQLPAMPTVPGLLGAAAPVPAPAPAPAAAPPPAPAPAADPPAAPVPDAPQPAILGQAALQNAFTFFNPANFDASSLLGQSVPTFAPPNLDFVAQMQRQFFPGMTPAQPAAAGTDAQASDISEVRVRPEDPYSQEAQMKIKSALEMEQERQQQAQVKDQEQVPLLWFRMPTTQNQDATEEKTLEDLRVEAKLRAFERQVIAELRMLQKIELMAKQMRSSAAAQNGDSPYRISYPLSRTPIHKITRADIEQALRDDYVRRLVNKEAQRRARNSGINTQKANALKRQAKSQDQTLSKEDIVQIMAYAYRMANEQMESEKGKQDKVYAAYRTEQNPMMMQQRQWSEEQAKIQQNQQQIQQNPMMMQQRQWSEEQAKIQQNQQQIQQNPMMMQQRQWSEEQAKIQQNQQQIQQNPMMMQQRQWSEEQAKIQQNQQQIQQNPMMVQQRQWSEEQAKIQQNQQQIQQNPMMMQQRQWSEEQAKIQHDQQMAQQMAQQGLMMTEQRQRQWSEDQAKIQQAQQMAQQTPMMMPQMQQRQWTEDPQMVQQMQQRQWAEDQTRMQMAQQNPMMQQQRQMAENPQMMQQRQWSEEQTKIEQAQQMAQQNQMMMQQMQQRQWSEDQAQIQQQQRQMMQQTPMMMKERQWAEENPQSVQQQGPMMMQQQMPSMMQREVEDEDNKAEDDLVGEAGPQMPENEGTARHKVDALGVGGNKRKKSKSKSAPPTVINYYYAAPQRPVVQSYGTSYGGGGYGSNAYGVPRPVNSYQSQGYRAAVGNDEVDEMLRQHQTMARTINPKQPGEVGGSESQKSNSNPPTTLTPAPQEQPQEHRVHKRLAHFHRFGREAGLNATTSKGCGCGRLDCLCGRSCRCGRRGLESRVVSSRTSGTCQCKASHRNKRSVEYGTLETIDEGSLNELRREYKLGLKEITLSPDEDPAEALMRYNAASIREALERASMEPLEIGGDQYEEDAQQEPMEEEQLQHDPNTEPQYNHKDFVRLTTSTASPITSTTEAATPTGSDSTSEATVTPEVTTTTSTSTTTTTESTKDEGLDMQQDSQAEAESSHVTKSISKQEAEIHQLHSIVEELKNEILKLNLRCSTIISNNVAKEPVTEKNPPVVEEPSKQEDKPKVEEKVIAEEQAPVEQEEELEEDEDSTSISTTTETPSPSGSYSTKPGLSLGSPRVDEQSGSSNKLDYDDDNNWQRILANRGYDTDYLTKSHERQFAQGQNLEMPKNCNYDGNGSQEYGPYPEFQADEPSTDTEGKAKRALSVKQQAQLLNAALNDSGSDSSDGTTTTTTPSPYAMRGKFVRRRSTARRVPIPKIGKASDEVWVRSPRQAKMPQRPKKSMSKPKKQSSQVTTQATVSSTKLDSLVDVLKDLVRLQIQKEKKSSLLRTQSNNLSKTKPKSIKPVKVIKRKRLRRRQHKSIATTIRSPIQTKA.

Residues 1 to 19 (MRLFSLLPLLALLVVQAAG) form the signal peptide. Disordered regions lie at residues 23-60 (VTSD…PSIN), 184-212 (APAP…PDAP), and 268-294 (PAQP…EDPY). Polar residues predominate over residues 32-41 (AGSTTNSTTD). The segment covering 268-280 (PAQPAAAGTDAQA) has biased composition (low complexity). Repeat copies occupy residues 493–518 (QNPM…QQIQ), 519–544 (QNPM…QQIQ), 545–570 (QNPM…QQIQ), 571–596 (QNPM…QQIQ), and 597–622 (QNPM…QQIQ). The tract at residues 493-788 (QNPMMMQQRQ…IQQQQRQMMQ (296 aa)) is 12 X 26 AA approximate tandem repeats, Glu, Met-rich. Residues 623–652 (QNPMMMQQRQWSEEQAKIQHDQQMAQQMAQ) form a 6; approximate repeat. One copy of the 7; approximate repeat lies at 653-680 (QGLMMTEQRQRQWSEDQAKIQQAQQMAQ). The 8; approximate repeat unit spans residues 681–696 (QTPMMMPQMQQRQWTE). A 9; approximate repeat occupies 697 to 720 (DPQMVQQMQQRQWAEDQTRMQMAQ). The stretch at 721–733 (QNPMMQQQRQMAE) is one 10; approximate repeat. The 11; approximate repeat unit spans residues 734 to 758 (NPQMMQQRQWSEEQTKIEQAQQMAQ). The stretch at 759–788 (QNQMMMQQMQQRQWSEDQAQIQQQQRQMMQ) is one 12; approximate repeat. Disordered stretches follow at residues 843 to 875 (GPQM…SKSA), 944 to 983 (RTIN…EHRV), 1119 to 1221 (EEDA…TKSI), 1261 to 1352 (PVTE…DDNN), 1375 to 1515 (FAQG…QATV), and 1538 to 1590 (EKKS…QTKA). Residues 957 to 977 (SESQKSNSNPPTTLTPAPQEQ) show a composition bias toward polar residues. Residues 1119-1130 (EEDAQQEPMEEE) are compositionally biased toward acidic residues. Over residues 1131 to 1148 (QLQHDPNTEPQYNHKDFV) the composition is skewed to basic and acidic residues. A compositionally biased stretch (low complexity) spans 1151–1195 (TTSTASPITSTTEAATPTGSDSTSEATVTPEVTTTTSTSTTTTTE). Residues 1205 to 1221 (QQDSQAEAESSHVTKSI) are compositionally biased toward polar residues. Residues 1272–1288 (EPSKQEDKPKVEEKVIA) show a composition bias toward basic and acidic residues. The span at 1295–1306 (EQEEELEEDEDS) shows a compositional bias: acidic residues. Low complexity-rich tracts occupy residues 1307–1319 (TSIS…PSPS) and 1435–1452 (DSGS…TPSP). Residues 1493–1504 (QRPKKSMSKPKK) are compositionally biased toward basic residues. Over residues 1505 to 1515 (QSSQVTTQATV) the composition is skewed to low complexity. A compositionally biased stretch (basic residues) spans 1554–1576 (TKPKSIKPVKVIKRKRLRRRQHK). Residues 1577–1590 (SIATTIRSPIQTKA) show a composition bias toward polar residues.

The protein resides in the secreted. Its function is as follows. Required for proper assembly of the eggshell. This chain is Defective chorion protein, FC177 isoform, found in Drosophila melanogaster (Fruit fly).